A 122-amino-acid polypeptide reads, in one-letter code: Large ribosomal subunit protein uL14 (122 aa).

This sequence belongs to the universal ribosomal protein uL14 family. In terms of assembly, part of the 50S ribosomal subunit. Forms a cluster with proteins L3 and L19. In the 70S ribosome, L14 and L19 interact and together make contacts with the 16S rRNA in bridges B5 and B8.

Binds to 23S rRNA. Forms part of two intersubunit bridges in the 70S ribosome. The polypeptide is Large ribosomal subunit protein uL14 (Shewanella sediminis (strain HAW-EB3)).